A 522-amino-acid chain; its full sequence is Protein nucleotidyltransferase YdiU (522 aa).

The ATP site is built by Gly-109, Gly-111, Arg-112, Lys-132, Asp-144, Gly-145, Arg-195, and Arg-202. The active-site Proton acceptor is Asp-271. The Mg(2+) site is built by Asn-272 and Asp-281. Asp-281 is a binding site for ATP.

This sequence belongs to the SELO family. Mg(2+) serves as cofactor. It depends on Mn(2+) as a cofactor.

It catalyses the reaction L-seryl-[protein] + ATP = 3-O-(5'-adenylyl)-L-seryl-[protein] + diphosphate. The catalysed reaction is L-threonyl-[protein] + ATP = 3-O-(5'-adenylyl)-L-threonyl-[protein] + diphosphate. The enzyme catalyses L-tyrosyl-[protein] + ATP = O-(5'-adenylyl)-L-tyrosyl-[protein] + diphosphate. It carries out the reaction L-histidyl-[protein] + UTP = N(tele)-(5'-uridylyl)-L-histidyl-[protein] + diphosphate. It catalyses the reaction L-seryl-[protein] + UTP = O-(5'-uridylyl)-L-seryl-[protein] + diphosphate. The catalysed reaction is L-tyrosyl-[protein] + UTP = O-(5'-uridylyl)-L-tyrosyl-[protein] + diphosphate. Nucleotidyltransferase involved in the post-translational modification of proteins. It can catalyze the addition of adenosine monophosphate (AMP) or uridine monophosphate (UMP) to a protein, resulting in modifications known as AMPylation and UMPylation. The chain is Protein nucleotidyltransferase YdiU from Burkholderia vietnamiensis (strain G4 / LMG 22486) (Burkholderia cepacia (strain R1808)).